Reading from the N-terminus, the 364-residue chain is tRNA/tmRNA (uracil-C(5))-methyltransferase (364 aa).

S-adenosyl-L-methionine is bound by residues glutamine 189, tyrosine 216, asparagine 221, glutamate 237, and aspartate 297. Cysteine 322 (nucleophile) is an active-site residue. Residue glutamate 356 is the Proton acceptor of the active site.

Belongs to the class I-like SAM-binding methyltransferase superfamily. RNA M5U methyltransferase family. TrmA subfamily.

It carries out the reaction uridine(54) in tRNA + S-adenosyl-L-methionine = 5-methyluridine(54) in tRNA + S-adenosyl-L-homocysteine + H(+). The catalysed reaction is uridine(341) in tmRNA + S-adenosyl-L-methionine = 5-methyluridine(341) in tmRNA + S-adenosyl-L-homocysteine + H(+). In terms of biological role, dual-specificity methyltransferase that catalyzes the formation of 5-methyluridine at position 54 (m5U54) in all tRNAs, and that of position 341 (m5U341) in tmRNA (transfer-mRNA). In Campylobacter curvus (strain 525.92), this protein is tRNA/tmRNA (uracil-C(5))-methyltransferase.